A 150-amino-acid chain; its full sequence is HTH-type transcriptional regulator LrpA (150 aa).

In terms of domain architecture, HTH asnC-type spans 5–66 (LDDIDRILVR…RINPEAVGHL (62 aa)). Positions 24-43 (LSELATRAGLSVSAVQSRVR) form a DNA-binding region, H-T-H motif. L-phenylalanine is bound by residues valine 100, glycine 102, and glutamate 104.

As to quaternary structure, homohexadecamer in the absence of any added ligand. Homooctamer. Tetramer of dimers. In the presence of phenylalanine, the hexadecamer dissociates into an octamer, which further dissociates partially into lower-order oligomers.

The DNA-binding activity of LrpA is modulated by interaction of LrpA with various effector molecules, including amino acids and vitamins. The DNA binding affinity is decreased by several amino acids, including phenylalanine, tyrosine, tryptophan, histidine, leucine and aspartate. Preferentially binds to aromatic amino acids. Besides amino acids, the binding affinity is also reduced by vitamins, including B1, B3, B6, VC, B7, B9, B12, VA and VK3. Functionally, transcriptional regulator that probably plays an important role in M.tuberculosis persistence. Regulates the expression of several genes, including lat, rsmG, whiB2, lsr2 and Rv2011c. Acts by binding directly to the promoter region of the target genes. The polypeptide is HTH-type transcriptional regulator LrpA (Mycobacterium tuberculosis (strain ATCC 25618 / H37Rv)).